We begin with the raw amino-acid sequence, 421 residues long: Enolase (421 aa).

Gln165 provides a ligand contact to (2R)-2-phosphoglycerate. Glu207 functions as the Proton donor in the catalytic mechanism. Asp244, Glu285, and Asp312 together coordinate Mg(2+). (2R)-2-phosphoglycerate-binding residues include Lys337, Arg366, Ser367, and Lys388. The Proton acceptor role is filled by Lys337.

The protein belongs to the enolase family. It depends on Mg(2+) as a cofactor.

The protein resides in the cytoplasm. It is found in the secreted. Its subcellular location is the cell surface. The enzyme catalyses (2R)-2-phosphoglycerate = phosphoenolpyruvate + H2O. The protein operates within carbohydrate degradation; glycolysis; pyruvate from D-glyceraldehyde 3-phosphate: step 4/5. Its function is as follows. Catalyzes the reversible conversion of 2-phosphoglycerate (2-PG) into phosphoenolpyruvate (PEP). It is essential for the degradation of carbohydrates via glycolysis. The protein is Enolase of Ehrlichia ruminantium (strain Welgevonden).